The chain runs to 364 residues: UDP-N-acetylglucosamine--N-acetylmuramyl-(pentapeptide) pyrophosphoryl-undecaprenol N-acetylglucosamine transferase 1 (364 aa).

Residues 10–12 (TGG), N124, S195, I250, and Q295 contribute to the UDP-N-acetyl-alpha-D-glucosamine site.

Belongs to the glycosyltransferase 28 family. MurG subfamily.

It localises to the cell membrane. The enzyme catalyses di-trans,octa-cis-undecaprenyl diphospho-N-acetyl-alpha-D-muramoyl-L-alanyl-D-glutamyl-meso-2,6-diaminopimeloyl-D-alanyl-D-alanine + UDP-N-acetyl-alpha-D-glucosamine = di-trans,octa-cis-undecaprenyl diphospho-[N-acetyl-alpha-D-glucosaminyl-(1-&gt;4)]-N-acetyl-alpha-D-muramoyl-L-alanyl-D-glutamyl-meso-2,6-diaminopimeloyl-D-alanyl-D-alanine + UDP + H(+). It functions in the pathway cell wall biogenesis; peptidoglycan biosynthesis. Its function is as follows. Cell wall formation. Catalyzes the transfer of a GlcNAc subunit on undecaprenyl-pyrophosphoryl-MurNAc-pentapeptide (lipid intermediate I) to form undecaprenyl-pyrophosphoryl-MurNAc-(pentapeptide)GlcNAc (lipid intermediate II). This chain is UDP-N-acetylglucosamine--N-acetylmuramyl-(pentapeptide) pyrophosphoryl-undecaprenol N-acetylglucosamine transferase 1, found in Bacillus cereus (strain ATCC 14579 / DSM 31 / CCUG 7414 / JCM 2152 / NBRC 15305 / NCIMB 9373 / NCTC 2599 / NRRL B-3711).